A 553-amino-acid chain; its full sequence is Sulfatase (553 aa).

Positions 1–25 (MTSEMKKFSKIVLFGLLISPLLASS) are cleaved as a signal peptide. Residues Asp-43, Asp-44, and Cys-88 each coordinate Ca(2+). The active-site Nucleophile is the Cys-88. Residue Cys-88 is modified to 3-oxoalanine (Cys). The active site involves His-159. 2 residues coordinate Ca(2+): Asp-350 and Asn-351.

Belongs to the sulfatase family. The cofactor is Ca(2+). Post-translationally, the conversion to 3-oxoalanine (also known as C-formylglycine, FGly), of a serine or cysteine residue in prokaryotes and of a cysteine residue in eukaryotes, is critical for catalytic activity. This post-translational modification is severely defective in multiple sulfatase deficiency (MSD).

It is found in the secreted. Its function is as follows. Sulfatase that may be involved in ulvan degradation. Ulvan is the main polysaccharide component of the Ulvales (green seaweed) cell wall. It is composed of disaccharide building blocks comprising 3-sulfated rhamnose (Rha3S) linked to D-glucuronic acid (GlcA), L-iduronic acid (IduA), or D-xylose (Xyl). This Formosa agariphila (strain DSM 15362 / KCTC 12365 / LMG 23005 / KMM 3901 / M-2Alg 35-1) protein is Sulfatase.